Consider the following 245-residue polypeptide: Cytochrome P450 CYP82H23 (245 aa).

This sequence belongs to the cytochrome P450 family. It depends on heme as a cofactor.

In terms of biological role, probable heme-thiolate monooxygenase. The protein is Cytochrome P450 CYP82H23 of Panax ginseng (Korean ginseng).